Consider the following 261-residue polypeptide: N-acetyltransferase ECO1 (261 aa).

The segment at 29 to 53 adopts a CCHH-type zinc-finger fold; sequence LKCPKCEMKYSPNSIDDVATHKKYH. An N-acetyltransferase domain is found at 102–261; sequence VMIQENKPAE…SGHILIPCYL (160 aa).

This sequence belongs to the acetyltransferase family. ECO subfamily.

It localises to the nucleus. In terms of biological role, probable acetyltransferase required for the establishment of sister chromatid cohesion and couple the processes of cohesion and DNA replication to ensure that only sister chromatids become paired together. In contrast to the structural cohesins, the deposition and establishment factors are required only during S phase. Acts by acetylating the cohesin complex component SMC3. This Candida glabrata (strain ATCC 2001 / BCRC 20586 / JCM 3761 / NBRC 0622 / NRRL Y-65 / CBS 138) (Yeast) protein is N-acetyltransferase ECO1 (ECO1).